We begin with the raw amino-acid sequence, 85 residues long: UPF0297 protein CLL_A1175 (85 aa).

The protein belongs to the UPF0297 family.

This chain is UPF0297 protein CLL_A1175, found in Clostridium botulinum (strain Eklund 17B / Type B).